Consider the following 137-residue polypeptide: SPbeta prophage-derived uncharacterized protein YoqU (137 aa).

The chain is SPbeta prophage-derived uncharacterized protein YoqU (yoqU) from Bacillus subtilis (strain 168).